A 728-amino-acid chain; its full sequence is MDKTQSSQGKCPVMHGANSAVASNNMDWWPKALNLDILHQHDKKTDPMDPKFNYRDAFNSLDLAAVKRDLNALMTDSQDWWPADWGHYGGLMIRMAWHSAGTYRVADGRGGAGTGNQRFAPLNSWPDNANLDKARRLLWPIKKKYGNKLSWADLMILAGNVAYESMGLKTYGFAGGREDIWHPEKDIYWGSEKQWLAPTENPNSRYSGERDLENPLAAVMMGLIYVNPEGVDGKPDPLRTAQDVRVTFARMAMNDEETVALTAGGHTVGKCHGNGKAQDLGPEPEGEELEAQGLGWLNKKGPGTGANAVTSGLEGAWTTHPTQWDNGYFHLLLNYDWELKKSPAGASQWEPINIKEEDKVVSVGDPNRKFNPIMTDADMAMKMDPEYRKISEKFYQDPAYFSEVFARAWFKLTHRDLGPKSRYLGPEVPNEDLLWQDPIPSVDYRLDASEIVELKAKLLASGLSVSDLVATAWDSARTFRGSDFRGGANGARIRLAPQKDWQANEPERLQKVLKVLIELQASLSKKVSIADLIVLGGAAAIEKAAHAAGVKITVPFIPGRGDATQEMTDVESFAVLEPLHDAYRNWQKKDYVVQPEEMMLDRTQLMGLTAHEMTVLIGGMRVLGTNYGGTRHGVFTDKVGVLTNDFFVNLTDMAYNWKPAGSNLYEIVERKTGAVKWTATRVDLVFGSNSILRSYAEVYAQDDAKEKFVHDFVAAWTKVMNADRFDLA.

The first 22 residues, 1-22, serve as a signal peptide directing secretion; sequence MDKTQSSQGKCPVMHGANSAVA. A cross-link (tryptophyl-tyrosyl-methioninium (Trp-Tyr) (with M-251)) is located at residues 97 to 225; that stretch reads WHSAGTYRVA…LAAVMMGLIY (129 aa). Catalysis depends on histidine 98, which acts as the Proton acceptor. A cross-link (tryptophyl-tyrosyl-methioninium (Tyr-Met) (with W-97)) is located at residues 225–251; the sequence is YVNPEGVDGKPDPLRTAQDVRVTFARM. Residue histidine 266 coordinates heme b.

This sequence belongs to the peroxidase family. Peroxidase/catalase subfamily. Homodimer or homotetramer. It depends on heme b as a cofactor. Post-translationally, formation of the three residue Trp-Tyr-Met cross-link is important for the catalase, but not the peroxidase activity of the enzyme.

The enzyme catalyses H2O2 + AH2 = A + 2 H2O. It catalyses the reaction 2 H2O2 = O2 + 2 H2O. In terms of biological role, bifunctional enzyme with both catalase and broad-spectrum peroxidase activity. This Shewanella sp. (strain ANA-3) protein is Catalase-peroxidase 1.